Here is a 105-residue protein sequence, read N- to C-terminus: Thioredoxin (105 aa).

A Thioredoxin domain is found at 1–105 (MVNNVTDISF…SLLDWINKSI (105 aa)). The cysteines at positions 30 and 33 are disulfide-linked.

This sequence belongs to the thioredoxin family.

Component of the thioredoxin-thioredoxin reductase system. Participates in various redox reactions through the reversible oxidation of its active center dithiol to a disulfide and catalyzes dithiol-disulfide exchange reactions. The polypeptide is Thioredoxin (trxA) (Rickettsia typhi (strain ATCC VR-144 / Wilmington)).